A 227-amino-acid chain; its full sequence is Octanoyltransferase (227 aa).

In terms of domain architecture, BPL/LPL catalytic spans 35–210; that stretch reads DKTPDEIWLV…TFLQLVGYSA (176 aa). Substrate-binding positions include 74 to 81, 141 to 143, and 154 to 156; these read RGGQVTYH, SLG, and GLA. Residue cysteine 172 is the Acyl-thioester intermediate of the active site.

Belongs to the LipB family.

The protein resides in the cytoplasm. The catalysed reaction is octanoyl-[ACP] + L-lysyl-[protein] = N(6)-octanoyl-L-lysyl-[protein] + holo-[ACP] + H(+). Its pathway is protein modification; protein lipoylation via endogenous pathway; protein N(6)-(lipoyl)lysine from octanoyl-[acyl-carrier-protein]: step 1/2. Its function is as follows. Catalyzes the transfer of endogenously produced octanoic acid from octanoyl-acyl-carrier-protein onto the lipoyl domains of lipoate-dependent enzymes. Lipoyl-ACP can also act as a substrate although octanoyl-ACP is likely to be the physiological substrate. The chain is Octanoyltransferase from Pectobacterium atrosepticum (strain SCRI 1043 / ATCC BAA-672) (Erwinia carotovora subsp. atroseptica).